Consider the following 395-residue polypeptide: L-rhamnonate dehydratase (395 aa).

Substrate is bound by residues His-23 and Arg-49. Mg(2+) contacts are provided by Asp-215, Glu-241, and Glu-269. His-319 functions as the Proton acceptor in the catalytic mechanism. Position 339 (Glu-339) interacts with substrate.

The protein belongs to the mandelate racemase/muconate lactonizing enzyme family. RhamD subfamily. As to quaternary structure, homooctamer; tetramer of dimers. The cofactor is Mg(2+).

It catalyses the reaction L-rhamnonate = 2-dehydro-3-deoxy-L-rhamnonate + H2O. In terms of biological role, catalyzes the dehydration of L-rhamnonate to 2-keto-3-deoxy-L-rhamnonate (KDR). The protein is L-rhamnonate dehydratase of Delftia acidovorans (strain DSM 14801 / SPH-1).